Here is a 562-residue protein sequence, read N- to C-terminus: Teichoic acid ribitol-phosphate polymerase TarL (562 aa).

It belongs to the CDP-glycerol glycerophosphotransferase family.

Its subcellular location is the cell membrane. The catalysed reaction is 4-O-[di(2R)-glycerylphospho]-N-acetyl-beta-D-mannosaminyl-(1-&gt;4)-N-acetyl-alpha-D-glucosaminyl di-trans,octa-cis-undecaprenyl diphosphate + n CDP-L-ribitol = 4-O-[(D-ribitylphospho)(n)-di{(2R)-glycerylphospho}]-N-acetyl-beta-D-mannosaminyl-(1-&gt;4)-N-acetyl-alpha-D-glucosaminyl di-trans,octa-cis-undecaprenyl diphosphate + n CMP + n H(+). It participates in cell wall biogenesis; poly(ribitol phosphate) teichoic acid biosynthesis. Responsible for the polymerization of the main chain of the major teichoic acid by sequential transfer of ribitol phosphate units from CDP-ribitol to the second glycerol phosphate attached to the disaccharide linkage unit. Synthesizes polymers of more than 40 ribitol phosphate units in length. The protein is Teichoic acid ribitol-phosphate polymerase TarL (tarL) of Staphylococcus aureus (strain NCTC 8325 / PS 47).